A 104-amino-acid polypeptide reads, in one-letter code: Meiotically up-regulated gene 150 protein (104 aa).

Helical transmembrane passes span 30 to 50 (FFLKNIIVLSNYLYLLYKAWI), 54 to 74 (TISLCCDFPLFNFLFIAIPYF), and 84 to 104 (LLWFLFVSLCFITLSFQSLEI).

The protein localises to the endoplasmic reticulum membrane. Has a role in meiosis. The chain is Meiotically up-regulated gene 150 protein (mug150) from Schizosaccharomyces pombe (strain 972 / ATCC 24843) (Fission yeast).